The following is a 416-amino-acid chain: Exodeoxyribonuclease 7 large subunit (416 aa).

Belongs to the XseA family. Heterooligomer composed of large and small subunits.

It localises to the cytoplasm. It carries out the reaction Exonucleolytic cleavage in either 5'- to 3'- or 3'- to 5'-direction to yield nucleoside 5'-phosphates.. In terms of biological role, bidirectionally degrades single-stranded DNA into large acid-insoluble oligonucleotides, which are then degraded further into small acid-soluble oligonucleotides. In Sulfurimonas denitrificans (strain ATCC 33889 / DSM 1251) (Thiomicrospira denitrificans (strain ATCC 33889 / DSM 1251)), this protein is Exodeoxyribonuclease 7 large subunit.